The sequence spans 297 residues: Tyrosine recombinase XerD (297 aa).

The Core-binding (CB) domain occupies 1 to 86; that stretch reads MNDLIDDFLH…SLRSFFHYLM (86 aa). In terms of domain architecture, Tyr recombinase spans 107–291; sequence SLPKVLNLDD…TKLRLKDVYK (185 aa). Active-site residues include R147, K171, H243, R246, and H269. Y278 (O-(3'-phospho-DNA)-tyrosine intermediate) is an active-site residue.

Belongs to the 'phage' integrase family. XerD subfamily. As to quaternary structure, forms a cyclic heterotetrameric complex composed of two molecules of XerC and two molecules of XerD.

It is found in the cytoplasm. Its function is as follows. Site-specific tyrosine recombinase, which acts by catalyzing the cutting and rejoining of the recombining DNA molecules. The XerC-XerD complex is essential to convert dimers of the bacterial chromosome into monomers to permit their segregation at cell division. It also contributes to the segregational stability of plasmids. The polypeptide is Tyrosine recombinase XerD (Listeria innocua serovar 6a (strain ATCC BAA-680 / CLIP 11262)).